An 891-amino-acid chain; its full sequence is Alanine--tRNA ligase (891 aa).

Zn(2+) contacts are provided by His-564, His-568, Cys-678, and His-682.

This sequence belongs to the class-II aminoacyl-tRNA synthetase family. The cofactor is Zn(2+).

The protein resides in the cytoplasm. It carries out the reaction tRNA(Ala) + L-alanine + ATP = L-alanyl-tRNA(Ala) + AMP + diphosphate. Its function is as follows. Catalyzes the attachment of alanine to tRNA(Ala) in a two-step reaction: alanine is first activated by ATP to form Ala-AMP and then transferred to the acceptor end of tRNA(Ala). Also edits incorrectly charged Ser-tRNA(Ala) and Gly-tRNA(Ala) via its editing domain. This is Alanine--tRNA ligase from Nitrobacter winogradskyi (strain ATCC 25391 / DSM 10237 / CIP 104748 / NCIMB 11846 / Nb-255).